The following is a 122-amino-acid chain: MIQSFTRLAVADNSGAKELMCIKILGGSKRRYATVGDIIVCSVKKALPNGKIKRGQVVKAVVVRTKKELHRGNGSLIRFDENAAVVLDSKKELIGTRIFGPVGREVRYNGFMKIVSLAPEVL.

It belongs to the universal ribosomal protein uL14 family. Part of the 50S ribosomal subunit. Forms a cluster with proteins L3 and L19. In the 70S ribosome, L14 and L19 interact and together make contacts with the 16S rRNA in bridges B5 and B8.

Functionally, binds to 23S rRNA. Forms part of two intersubunit bridges in the 70S ribosome. This is Large ribosomal subunit protein uL14 from Campylobacter hominis (strain ATCC BAA-381 / DSM 21671 / CCUG 45161 / LMG 19568 / NCTC 13146 / CH001A).